The following is a 78-amino-acid chain: Antitoxin VapB27 (78 aa).

Positions 1–45 (MKAVVDAAGRIVVPKPLREALGLQPGSTVEISRYGAGLHLIPTGR) constitute a SpoVT-AbrB domain.

Belongs to the VapB family. Interacts with cognate toxin VapC27 and non-cognate toxins MazF6 and VapC40. Interaction with MazF6 and MazF9 partially neutralizes the toxins.

Antitoxin component of a type II toxin-antitoxin (TA) system. Cognate toxin is VapC27. Upon expression in E.coli partially counteracts the ribonuclease activity of non-cognate toxins MazF6 and MazF9. This is Antitoxin VapB27 (vapB27) from Mycobacterium tuberculosis (strain ATCC 25618 / H37Rv).